The sequence spans 269 residues: Signal recognition particle receptor subunit beta (269 aa).

Residues 35–55 (LLSVAVAVLAVLLTLVFWKFI) form a helical membrane-spanning segment. Residues 69 to 77 (GLCDSGKTL) and 90 to 93 (TQTS) contribute to the GTP site. S110 is subject to Phosphoserine. GTP is bound at residue G118. A Phosphothreonine modification is found at T212. Residue A246 participates in GTP binding.

It belongs to the SRP receptor beta subunit family. In terms of assembly, heterodimer with SRPRA.

It localises to the endoplasmic reticulum membrane. Functionally, component of the signal recognition particle (SRP) complex receptor (SR). Ensures, in conjunction with the SRP complex, the correct targeting of the nascent secretory proteins to the endoplasmic reticulum membrane system. May mediate the membrane association of SR. In Rattus norvegicus (Rat), this protein is Signal recognition particle receptor subunit beta (Srprb).